Reading from the N-terminus, the 311-residue chain is MKKKSLLPLGLAIGLASLAASPLIQASTYTQTKYPIVLAHGMLGFDNILGVDYWFGIPSALRRDGAQVYVTEVSQLDTSEVRGEQLLQQVEEIVALSGQPKVNLIGHSHGGPTIRYVAAVRPDLIASATSVGAPHKGSDTADFLRQIPPGSAGEAVLSGLVNSLGALISFLSSGSTGTQNSLGSLESLNSEGAARFNAKYPQGIPTSACGEGAYKVNGVSYYSWSGSSPLTNFLDPSDAFLGASSLTFKNGTANDGLVGTCSSHLGMVIRDNYRMNHLDEVNQVFGLTSLFETSPVSVYRQHANRLKNASL.

The N-terminal stretch at 1 to 26 (MKKKSLLPLGLAIGLASLAASPLIQA) is a signal peptide. Residues 35–280 (PIVLAHGMLG…DNYRMNHLDE (246 aa)) form the AB hydrolase-1 domain. M42 is a binding site for substrate. S108 (nucleophile) is an active-site residue. H109 is a binding site for substrate. C209 and C261 are joined by a disulfide. D235 contacts Ca(2+). Residues D255 and H277 each act as charge relay system in the active site. The Ca(2+) site is built by D279, Q283, and L287.

This sequence belongs to the AB hydrolase superfamily. Pseudomonas lipase family. Monomer. Ca(2+) serves as cofactor.

It is found in the secreted. The enzyme catalyses a triacylglycerol + H2O = a diacylglycerol + a fatty acid + H(+). Na(+) increases lipase activity. Inhibited by diethyl p-nitrophenyl phosphate and 3,4-dichloroisocoumarin (DCI). Catalyzes the hydrolysis of triacylglycerol. It also exhibits some esterase activity with p-nitrophenyl acetate and Tween 80 as substrates, however the lipase activity is approximately eight times the esterase activity. It shows a marked specificity for the 1,3-oleyl residues of triolein. This Pseudomonas aeruginosa (strain ATCC 15692 / DSM 22644 / CIP 104116 / JCM 14847 / LMG 12228 / 1C / PRS 101 / PAO1) protein is Triacylglycerol lipase.